We begin with the raw amino-acid sequence, 474 residues long: MVVGKITQVIGPVVDVDFPAGQLPKILNALKLSNPSISAEPDNLVLEVAQHLGESSVRTIAMDSTDGLVRGMEVRDTGKPIMVPVGNECLGRILNVVGVPIDEAGPVHAKKVAPIHREPPPFIEQSTKVEVFETGIKVIDLIAPYRKGGKIGLFGGAGVGKTVLILELINNVAKAHGGVSVFAGVGERTREGNDLFLEMSESKLADGSPVISKAALIYGQMNEPPGARSRVALSALAVAEHFRDEEGQDVLLFVDNIFRFTQAGSEVSALLGRIPSAVGYQPTLSTEMGAFQERITSTTKGSVTSVQAIYVPADDLTDPAPATAFAHLDATTVLSRAISELGIYPAVDPLDSNSTMLDPQIVGEKHYSVARRVQQTLQRYKDLQDIIAILGMDELSEDDKLVVARARKIQKFLSQPFFVAAQFTGLEGKLVPLKDTIAGFEEILDGKLDHVAEQDFYLVGGIEDVKAKASQRAS.

155 to 162 (GGAGVGKT) contributes to the ATP binding site.

The protein belongs to the ATPase alpha/beta chains family. In terms of assembly, F-type ATPases have 2 components, CF(1) - the catalytic core - and CF(0) - the membrane proton channel. CF(1) has five subunits: alpha(3), beta(3), gamma(1), delta(1), epsilon(1). CF(0) has three main subunits: a(1), b(2) and c(9-12). The alpha and beta chains form an alternating ring which encloses part of the gamma chain. CF(1) is attached to CF(0) by a central stalk formed by the gamma and epsilon chains, while a peripheral stalk is formed by the delta and b chains.

It is found in the cell inner membrane. The enzyme catalyses ATP + H2O + 4 H(+)(in) = ADP + phosphate + 5 H(+)(out). Produces ATP from ADP in the presence of a proton gradient across the membrane. The catalytic sites are hosted primarily by the beta subunits. The polypeptide is ATP synthase subunit beta (Sorangium cellulosum (strain So ce56) (Polyangium cellulosum (strain So ce56))).